The sequence spans 400 residues: Exodeoxyribonuclease 7 large subunit (400 aa).

It belongs to the XseA family. In terms of assembly, heterooligomer composed of large and small subunits.

Its subcellular location is the cytoplasm. It carries out the reaction Exonucleolytic cleavage in either 5'- to 3'- or 3'- to 5'-direction to yield nucleoside 5'-phosphates.. In terms of biological role, bidirectionally degrades single-stranded DNA into large acid-insoluble oligonucleotides, which are then degraded further into small acid-soluble oligonucleotides. This is Exodeoxyribonuclease 7 large subunit from Clostridium novyi (strain NT).